The chain runs to 1181 residues: MDHPEDESHSEKQDDEEALARLEEIKKSIEAKLTLRQNNLNPERPDSAYLRTLDSSIKRNTAVIKKLKQINEEQREGLMDDLRGVNLSKFVSEAVTAICEAKLKSSDIQAAVQICSLLHQRYKEFSASLTQGLLKVFFPGKSAEDLEADKNSKAMKKRSTLKLLLELYYVGVIEDSNIFINIIKDLTSVEQLKDRDTTQTNLTLLTSFARQGRIFLGLPISGQDEDFFKGLDVTADQKKSFKKAFNTYYDALADLLQSEHKLLLQMEKENAKLVNAKGELSEDSASSYEKLRKSYDHLYRNISSLAEALDMQPPVMPEDGTTRLTAGDEASPSGTVKDTSVPEPIWDDEDTKTFYECLPDLRAFVPAVLLGEAEPKSNEQSAKAKEKLSESSSEVVENQQTTEDTTEVSADSASMDDRSNAEQPKEKEEVEKEKAKDTKKEKGKEKDSEKKMEHEKEKGKSLDVANFERLLQRLPGCVSRDLIDQLTVEYCYLNSKTNRKKLVKALFNVPRTSLELLAYYSRMVATLASCMKDIPSMLVQMLEDEFNSLVHKKDQMNIETKIRNIRFIGELCKFKIVPAGLVFSCLKACLDEFTHHNIDVACNLLETCGRFLYRSPETTLRMTNMLDILMRLKNVKNLDPRQSTLVENAYYLCKPPERSARISKVRPPLHQYVRKLLFSDLDKDSIANVLKQLRKLPWSECEQYILKCFMKVHKGKYGQIHLIASLTSGLSRHHDEFVVAVVDEVLEEIRVGLELNEYGAQQKRLAHMRFLGELYNYEHVDSSVIFETLYLTLLYGHDTSEQEVLDPPEDFFRVRMVIILLETCGHYFDRGSSKKRLDQFLIHFQRYILSKGHLPLDIEFDLQDLFANLRPNMTRYSTIDEVNAAILQLEEREHASSGDKVSIERHSDTKPSNKSSSDVISSNGKSTAKDIRENGEAHGEESDSDSGSGSVVRDGQNEELDDGNHERGSESGDGDDYDDGDGPGSDDDKFRVRQKVVTVDLEEQADFDQELKALLQESMEQRKLELRGRPALNMTIPMSVFEGSGKDHHHFGRVVGENGEEVLDEENGEQREVQVKVLVKRGNKQQTRQMLIPSDCALVQSTKQKEAAELEEKQDIKRLVLEYNERDEEEANGLGTQILNWTSGGSRGSTRTGEGSGKSGGSRHRFYYHQGGGGSYHARRK.

Coiled-coil stretches lie at residues 6–41 (DESH…NNLN) and 260–309 (HKLL…AEAL). The region spanning 61–264 (TAVIKKLKQI…LLQSEHKLLL (204 aa)) is the MIF4G 1 domain. Disordered stretches follow at residues 309-348 (LDMQ…IWDD) and 375-459 (PKSN…KEKG). Positions 375–389 (PKSNEQSAKAKEKLS) are enriched in basic and acidic residues. A compositionally biased stretch (polar residues) spans 398 to 412 (NQQTTEDTTEVSADS). A compositionally biased stretch (basic and acidic residues) spans 415-459 (MDDRSNAEQPKEKEEVEKEKAKDTKKEKGKEKDSEKKMEHEKEKG). Coiled coils occupy residues 425 to 451 (KEKE…SEKK) and 539 to 559 (VQML…MNIE). MIF4G domains are found at residues 469–655 (RLLQ…LCKP) and 672–871 (YVRK…NLRP). A binds to UPF3 region spans residues 735–755 (DEFVVAVVDEVLEEIRVGLEL). Positions 893–911 (EHASSGDKVSIERHSDTKP) are enriched in basic and acidic residues. Residues 893 to 991 (EHASSGDKVS…GPGSDDDKFR (99 aa)) are disordered. Residues 912–926 (SNKSSSDVISSNGKS) are compositionally biased toward low complexity. Residues 927–941 (TAKDIRENGEAHGEE) are compositionally biased toward basic and acidic residues. The span at 972–985 (GDGDDYDDGDGPGS) shows a compositional bias: acidic residues. Residues 981–1181 (DGPGSDDDKF…GGGSYHARRK (201 aa)) form a sufficient for interaction with UPF1 C-terminus region. 2 interaction with UPF1 regions span residues 999–1023 (VDLE…EQRK) and 1066–1111 (ENGE…AELE). The necessary for interaction with UPF1 stretch occupies residues 999 to 1102 (VDLEEQADFD…PSDCALVQST (104 aa)). The stretch at 1000 to 1021 (DLEEQADFDQELKALLQESMEQ) forms a coiled coil. Positions 1129–1181 (EEANGLGTQILNWTSGGSRGSTRTGEGSGKSGGSRHRFYYHQGGGGSYHARRK) are disordered. A compositionally biased stretch (low complexity) spans 1142–1153 (TSGGSRGSTRTG).

Belongs to the RENT2 family. In terms of assembly, found in a post-splicing messenger ribonucleoprotein (mRNP) complex. Associates with the exon junction complex (EJC). Interacts with UPF1 and UPF3.

Its subcellular location is the nucleus. It localises to the nucleolus. It is found in the cytoplasm. The protein resides in the perinuclear region. In terms of biological role, recruited by UPF3 associated with the EJC core at the cytoplasmic side of the nuclear envelope and the subsequent formation of an UPF1-UPF2-UPF3 surveillance complex (including UPF1 bound to release factors at the stalled ribosome) is believed to activate NMD. In cooperation with UPF3 stimulates both ATPase and RNA helicase activities of UPF1. Binds spliced mRNA. Involved in nonsense-mediated decay (NMD) of mRNAs containing premature stop codons by associating with the nuclear exon junction complex (EJC). Required for plant development and adaptation to environmental stresses, including plant defense and response to wounding. The polypeptide is Regulator of nonsense transcripts UPF2 (UPF2) (Arabidopsis thaliana (Mouse-ear cress)).